Reading from the N-terminus, the 29-residue chain is MDIVNIAWAALMVVSTFSLTLVVWGRSGL.

A helical transmembrane segment spans residues 3–23; sequence IVNIAWAALMVVSTFSLTLVV.

The protein belongs to the PetN family. The 4 large subunits of the cytochrome b6-f complex are cytochrome b6, subunit IV (17 kDa polypeptide, PetD), cytochrome f and the Rieske protein, while the 4 small subunits are PetG, PetL, PetM and PetN. The complex functions as a dimer.

It is found in the plastid. Its subcellular location is the chloroplast thylakoid membrane. Its function is as follows. Component of the cytochrome b6-f complex, which mediates electron transfer between photosystem II (PSII) and photosystem I (PSI), cyclic electron flow around PSI, and state transitions. This chain is Cytochrome b6-f complex subunit 8, found in Huperzia lucidula (Shining clubmoss).